The chain runs to 238 residues: Cysteine-rich venom protein pseudechetoxin-like (238 aa).

Positions 1–19 (MIAFLVLLSLAAVLQQSSG) are cleaved as a signal peptide. Residues 20–28 (TVDFASESS) constitute a propeptide that is removed on maturation. Residues 38 to 164 (VDKHNDLRRS…STKYLYVCQY (127 aa)) enclose the SCP domain. Disulfide bonds link Cys75/Cys153, Cys92/Cys165, Cys148/Cys162, Cys184/Cys191, Cys187/Cys196, Cys200/Cys233, Cys209/Cys227, and Cys218/Cys231. Residues 200-233 (CKHNDDLSNCKTLVKKHKCQTEWIKSKCPATCFC) enclose the ShKT domain.

This sequence belongs to the CRISP family. Expressed by the venom gland.

The protein localises to the secreted. In terms of biological role, blocks olfactory (CNGA2) and retinal (CNGA1) CNG channel currents. Does not affect neither depolarization- nor caffeine-induced contraction of smooth muscle. The chain is Cysteine-rich venom protein pseudechetoxin-like from Pseudonaja textilis (Eastern brown snake).